The sequence spans 548 residues: Probable malate:quinone oxidoreductase (548 aa).

The tract at residues 521-548 (DKPQAADSTPKPQLKPQPVQKEVADIAL) is disordered. Residues 530-541 (PKPQLKPQPVQK) are compositionally biased toward low complexity.

This sequence belongs to the MQO family. The cofactor is FAD.

It catalyses the reaction (S)-malate + a quinone = a quinol + oxaloacetate. The protein operates within carbohydrate metabolism; tricarboxylic acid cycle; oxaloacetate from (S)-malate (quinone route): step 1/1. This is Probable malate:quinone oxidoreductase from Escherichia coli O139:H28 (strain E24377A / ETEC).